We begin with the raw amino-acid sequence, 506 residues long: 2-isopropylmalate synthase (506 aa).

A Pyruvate carboxyltransferase domain is found at 4–266 (ILFMDTTLRD…EPSMTLKEIK (263 aa)). Residues Asp-13, His-201, His-203, and Asn-237 each contribute to the Mn(2+) site. The segment at 390 to 506 (NITQLQVHFV…KLKSFIQLVK (117 aa)) is regulatory domain.

It belongs to the alpha-IPM synthase/homocitrate synthase family. LeuA type 1 subfamily. Homodimer. The cofactor is Mn(2+).

The protein resides in the cytoplasm. It catalyses the reaction 3-methyl-2-oxobutanoate + acetyl-CoA + H2O = (2S)-2-isopropylmalate + CoA + H(+). It functions in the pathway amino-acid biosynthesis; L-leucine biosynthesis; L-leucine from 3-methyl-2-oxobutanoate: step 1/4. Functionally, catalyzes the condensation of the acetyl group of acetyl-CoA with 3-methyl-2-oxobutanoate (2-ketoisovalerate) to form 3-carboxy-3-hydroxy-4-methylpentanoate (2-isopropylmalate). This chain is 2-isopropylmalate synthase, found in Bacillus cereus (strain 03BB102).